The following is a 257-amino-acid chain: Protein windbeutel (257 aa).

A signal peptide spans 1–21; the sequence is MMHILVTLLLVAIHSIPTTWA. The tract at residues 24–27 is CXXC motif; that stretch reads CTGC. The Prevents secretion from ER motif lies at 254-257; the sequence is KEEL.

As to quaternary structure, homodimer. Interacts with pip; the interaction is direct and does not require pip to be folded. Briefly expressed in the follicle cells of the ovary, at around the time when the dorsoventral axis of the egg chamber is first established.

It is found in the endoplasmic reticulum lumen. In terms of biological role, probable chaperone protein involved in dorsoventral axis patterning in early embryos. Probably acts by folding and targeting pipe (pip) into the Golgi. The chain is Protein windbeutel from Drosophila melanogaster (Fruit fly).